We begin with the raw amino-acid sequence, 291 residues long: Probable xyloglucan endotransglucosylase/hydrolase protein 16 (291 aa).

The signal sequence occupies residues 1 to 24 (MGRILNRTVLMTLLVVTMAGTAFS). The region spanning 25 to 215 (GSFNEEFDLT…WSKAPFTAYY (191 aa)) is the GH16 domain. Glu-101 acts as the Nucleophile in catalysis. Glu-105 acts as the Proton donor in catalysis. Glu-105 serves as a coordination point for xyloglucan. A glycan (N-linked (GlcNAc...) asparagine) is linked at Asn-109. Xyloglucan contacts are provided by residues 118–120 (HTN), 128–130 (NRE), 194–195 (DW), and Gly-199. Disulfide bonds link Cys-223-Cys-232 and Cys-272-Cys-286. Arg-277 provides a ligand contact to xyloglucan.

It belongs to the glycosyl hydrolase 16 family. XTH group 2 subfamily. Post-translationally, contains at least one intrachain disulfide bond essential for its enzymatic activity.

The protein localises to the secreted. Its subcellular location is the cell wall. The protein resides in the extracellular space. It is found in the apoplast. The enzyme catalyses breaks a beta-(1-&gt;4) bond in the backbone of a xyloglucan and transfers the xyloglucanyl segment on to O-4 of the non-reducing terminal glucose residue of an acceptor, which can be a xyloglucan or an oligosaccharide of xyloglucan.. Its function is as follows. Catalyzes xyloglucan endohydrolysis (XEH) and/or endotransglycosylation (XET). Cleaves and religates xyloglucan polymers, an essential constituent of the primary cell wall, and thereby participates in cell wall construction of growing tissues. This Arabidopsis thaliana (Mouse-ear cress) protein is Probable xyloglucan endotransglucosylase/hydrolase protein 16 (XTH16).